The chain runs to 334 residues: Ribosomal RNA small subunit methyltransferase H (334 aa).

Residues 54-56, aspartate 74, phenylalanine 100, aspartate 121, and glutamine 128 each bind S-adenosyl-L-methionine; that span reads GGH. Positions 272-318 are disordered; it reads RHSKGQYPEDENLPMPPKRPRYFSKPKRVGPSKAEISNNPRSRSAWL. Over residues 289 to 301 the composition is skewed to basic residues; it reads KRPRYFSKPKRVG.

It belongs to the methyltransferase superfamily. RsmH family.

It localises to the cytoplasm. The catalysed reaction is cytidine(1402) in 16S rRNA + S-adenosyl-L-methionine = N(4)-methylcytidine(1402) in 16S rRNA + S-adenosyl-L-homocysteine + H(+). Functionally, specifically methylates the N4 position of cytidine in position 1402 (C1402) of 16S rRNA. The sequence is that of Ribosomal RNA small subunit methyltransferase H from Psychrobacter arcticus (strain DSM 17307 / VKM B-2377 / 273-4).